Consider the following 306-residue polypeptide: Curved DNA-binding protein (306 aa).

The J domain occupies 5 to 69; sequence DYYAIMGVKP…QRRAEYDQMW (65 aa).

The protein localises to the cytoplasm. Its subcellular location is the nucleoid. In terms of biological role, DNA-binding protein that preferentially recognizes a curved DNA sequence. It is probably a functional analog of DnaJ; displays overlapping activities with DnaJ, but functions under different conditions, probably acting as a molecular chaperone in an adaptive response to environmental stresses other than heat shock. Lacks autonomous chaperone activity; binds native substrates and targets them for recognition by DnaK. Its activity is inhibited by the binding of CbpM. This is Curved DNA-binding protein from Shigella flexneri.